Here is a 403-residue protein sequence, read N- to C-terminus: Na(+)/H(+) antiporter NhaH (403 aa).

Helical transmembrane passes span 7–27, 34–54, 99–119, 125–145, 168–188, 196–216, 228–245, 250–272, 282–302, 311–331, 345–365, and 373–393; these read VFIQILLLLAISVTVIAIAKL, VALVLVGLVLGLTQLPFIEEA, LAFLGTFISSLTIGAASYFLL, VAFTFAALMSATDPISVLSIF, IAVVLFKIASIYLLTYIEMGW, FMFLKFAVGGALVGLILGYVF, LEVAFSALLFFGSYFIAE, SGVIAVVVGGFVFGDYGAKIGMS, FWDSVTLLANALIFLMVGLEI, WGYIVGAIAIVLVGRTIAVYI, ILINWGGLRGSLSIALALSLP, and QVLLLTFSVVLFSLIVQGLTL.

It belongs to the monovalent cation:proton antiporter 1 (CPA1) transporter (TC 2.A.36) family.

The protein resides in the cell membrane. Functionally, na(+)/H(+) antiporter that extrudes sodium in exchange for external protons. Can also transport lithium. The chain is Na(+)/H(+) antiporter NhaH (nhaH) from Halobacillus aidingensis.